Reading from the N-terminus, the 312-residue chain is MSAALKPLAQLDTPRLTHLQRLEAESIHIMRETVAETENPVMLYSIGKDSSVLLHLALKAFAPGRLPFPLLHVDTTWKFREMIAFRDARAKELGLDLLVYTNPDGLARGIGPVSHGSEVHTDVMKTQALRQALDKYKFDAAFGGARRDEEASRAKERIVSLRTAQHRWDPKRQRAEPWHLYNLKKKRGESLRVFPLSNWTELDIWLYIEQERIPIVPLYFSAERPVVRRDGQLIMVDDERLPLEPGETPELRKVRFRTLGCYPLTGAVESDAATLPEIIGETLAARTSERQGRVIDKDGAGAMERKKQEGYF.

Belongs to the PAPS reductase family. CysD subfamily. In terms of assembly, heterodimer composed of CysD, the smaller subunit, and CysN.

The catalysed reaction is sulfate + ATP + H(+) = adenosine 5'-phosphosulfate + diphosphate. It participates in sulfur metabolism; hydrogen sulfide biosynthesis; sulfite from sulfate: step 1/3. Its function is as follows. With CysN forms the ATP sulfurylase (ATPS) that catalyzes the adenylation of sulfate producing adenosine 5'-phosphosulfate (APS) and diphosphate, the first enzymatic step in sulfur assimilation pathway. APS synthesis involves the formation of a high-energy phosphoric-sulfuric acid anhydride bond driven by GTP hydrolysis by CysN coupled to ATP hydrolysis by CysD. The sequence is that of Sulfate adenylyltransferase subunit 2 from Methylobacterium nodulans (strain LMG 21967 / CNCM I-2342 / ORS 2060).